We begin with the raw amino-acid sequence, 325 residues long: Ribosomal RNA small subunit methyltransferase C (325 aa).

This sequence belongs to the methyltransferase superfamily. RsmC family. In terms of assembly, monomer.

The protein localises to the cytoplasm. It carries out the reaction guanosine(1207) in 16S rRNA + S-adenosyl-L-methionine = N(2)-methylguanosine(1207) in 16S rRNA + S-adenosyl-L-homocysteine + H(+). Its function is as follows. Specifically methylates the guanine in position 1207 of 16S rRNA in the 30S particle. This Alcanivorax borkumensis (strain ATCC 700651 / DSM 11573 / NCIMB 13689 / SK2) protein is Ribosomal RNA small subunit methyltransferase C.